The sequence spans 904 residues: Pyrimidine pathway regulatory protein 1 (904 aa).

Residues 1–11 (MKQKKFNSKKS) are compositionally biased toward basic residues. A disordered region spans residues 1-27 (MKQKKFNSKKSNRTDLSKRGDSPNIGI). The segment covering 12-21 (NRTDLSKRGD) has biased composition (basic and acidic residues). Residues Cys34, Cys37, Cys44, Cys51, Cys54, and Cys61 each contribute to the Zn(2+) site. The zn(2)-C6 fungal-type DNA-binding region spans 34-61 (CKRCRLKKIKCDQEFPSCKRCAKLEVPC). The segment at 883–904 (GNEGESSYDISKGKNSESGGIF) is disordered.

As to quaternary structure, binds DNA as a homodimer.

The protein resides in the nucleus. Its function is as follows. Positive regulator of URA1 and URA3 expression. This chain is Pyrimidine pathway regulatory protein 1 (PPR1), found in Saccharomyces cerevisiae (strain ATCC 204508 / S288c) (Baker's yeast).